The following is a 256-amino-acid chain: Ribonuclease 3 (256 aa).

In terms of domain architecture, RNase III spans 3–125 (LDALQQRLGY…IVGAVFLDAG (123 aa)). E38 is a Mg(2+) binding site. D42 is a catalytic residue. D111 and E114 together coordinate Mg(2+). E114 is an active-site residue. The DRBM domain occupies 152-222 (DAKTLLQEYL…AKLALDEVQK (71 aa)). Residues 229-256 (KRSRAERTGKTRKQPQPQDPQLSLRLKE) are disordered.

The protein belongs to the ribonuclease III family. In terms of assembly, homodimer. Mg(2+) serves as cofactor.

Its subcellular location is the cytoplasm. It carries out the reaction Endonucleolytic cleavage to 5'-phosphomonoester.. Functionally, digests double-stranded RNA. Involved in the processing of primary rRNA transcript to yield the immediate precursors to the large and small rRNAs (23S and 16S). Processes some mRNAs, and tRNAs when they are encoded in the rRNA operon. Processes pre-crRNA and tracrRNA of type II CRISPR loci if present in the organism. This is Ribonuclease 3 from Cupriavidus taiwanensis (strain DSM 17343 / BCRC 17206 / CCUG 44338 / CIP 107171 / LMG 19424 / R1) (Ralstonia taiwanensis (strain LMG 19424)).